We begin with the raw amino-acid sequence, 27 residues long: Protein YkiD (27 aa).

The sequence is that of Protein YkiD from Escherichia coli (strain K12).